A 292-amino-acid chain; its full sequence is Phosphoribulokinase, chromosomal (292 aa).

Position 12 to 20 (12 to 20) interacts with ATP; that stretch reads GSSGAGTTS.

This sequence belongs to the phosphoribulokinase family. As to quaternary structure, homooctamer.

It carries out the reaction D-ribulose 5-phosphate + ATP = D-ribulose 1,5-bisphosphate + ADP + H(+). It functions in the pathway carbohydrate biosynthesis; Calvin cycle. In Cupriavidus necator (strain ATCC 17699 / DSM 428 / KCTC 22496 / NCIMB 10442 / H16 / Stanier 337) (Ralstonia eutropha), this protein is Phosphoribulokinase, chromosomal (cfxP).